The following is a 172-amino-acid chain: Envelope protein UL45 (172 aa).

The Intravirion portion of the chain corresponds to 1-27 (MPLRASEHAYRPLGPGTPPVRARLPAA). Residues 28 to 48 (AWVGVGTIIGGVVIIAALVLV) form a helical; Signal-anchor for type II membrane protein membrane-spanning segment. Residues 49-172 (PSRASWALSP…TSTRNALGLP (124 aa)) lie on the Virion surface side of the membrane.

This sequence belongs to the herpesviridae HHV-1 UL45 family.

The protein resides in the virion membrane. In terms of biological role, important virulence factor of HSV neurotropism. Seems to be required for glycoprotein B-induced fusion. Dispensable for growth in vitro. The chain is Envelope protein UL45 from Homo sapiens (Human).